A 153-amino-acid chain; its full sequence is Small ribosomal subunit protein uS19A (153 aa).

It belongs to the universal ribosomal protein uS19 family. Component of the small ribosomal subunit (SSU). Mature yeast ribosomes consist of a small (40S) and a large (60S) subunit. The 40S small subunit contains 1 molecule of ribosomal RNA (18S rRNA) and at least 33 different proteins. The large 60S subunit contains 3 rRNA molecules (25S, 5.8S and 5S rRNA) and at least 46 different proteins.

The protein localises to the cytoplasm. Its subcellular location is the nucleus. It localises to the nucleolus. Its function is as follows. Component of the ribosome, a large ribonucleoprotein complex responsible for the synthesis of proteins in the cell. The small ribosomal subunit (SSU) binds messenger RNAs (mRNAs) and translates the encoded message by selecting cognate aminoacyl-transfer RNA (tRNA) molecules. The large subunit (LSU) contains the ribosomal catalytic site termed the peptidyl transferase center (PTC), which catalyzes the formation of peptide bonds, thereby polymerizing the amino acids delivered by tRNAs into a polypeptide chain. The nascent polypeptides leave the ribosome through a tunnel in the LSU and interact with protein factors that function in enzymatic processing, targeting, and the membrane insertion of nascent chains at the exit of the ribosomal tunnel. uS19 is involved in the nuclear export of the small ribosomal subunit precursor. Has a role in the late stage of the assembly of pre-40S particles within the nucleus and controls their export to the cytoplasm. This Schizosaccharomyces pombe (strain 972 / ATCC 24843) (Fission yeast) protein is Small ribosomal subunit protein uS19A (rps1501).